Reading from the N-terminus, the 159-residue chain is Ribosomal RNA large subunit methyltransferase H (159 aa).

S-adenosyl-L-methionine is bound by residues Leu76, Gly107, and 126–131 (LSSLTL).

Belongs to the RNA methyltransferase RlmH family. Homodimer.

It localises to the cytoplasm. It catalyses the reaction pseudouridine(1915) in 23S rRNA + S-adenosyl-L-methionine = N(3)-methylpseudouridine(1915) in 23S rRNA + S-adenosyl-L-homocysteine + H(+). Its function is as follows. Specifically methylates the pseudouridine at position 1915 (m3Psi1915) in 23S rRNA. The chain is Ribosomal RNA large subunit methyltransferase H from Cupriavidus pinatubonensis (strain JMP 134 / LMG 1197) (Cupriavidus necator (strain JMP 134)).